The following is a 173-amino-acid chain: NADH-ubiquinone oxidoreductase chain 6 (173 aa).

A run of 5 helical transmembrane segments spans residues 1-21 (MTYLVSLFLLGLVLGLVAVAS), 24-44 (APYFAALGLVVAAGVGCGVLV), 53-73 (LVLFLIYLGGMLVVFAYSAAL), 87-107 (VLGYVVVYTVGVVLVAGLFWG), and 141-161 (GGMLIACAWVLLLTLFVVLEL).

This sequence belongs to the complex I subunit 6 family.

The protein localises to the mitochondrion membrane. It carries out the reaction a ubiquinone + NADH + 5 H(+)(in) = a ubiquinol + NAD(+) + 4 H(+)(out). Functionally, core subunit of the mitochondrial membrane respiratory chain NADH dehydrogenase (Complex I) that is believed to belong to the minimal assembly required for catalysis. Complex I functions in the transfer of electrons from NADH to the respiratory chain. The immediate electron acceptor for the enzyme is believed to be ubiquinone. This chain is NADH-ubiquinone oxidoreductase chain 6 (MT-ND6), found in Oncorhynchus mykiss (Rainbow trout).